Consider the following 419-residue polypeptide: Endochitinase 2 (419 aa).

The first 18 residues, 1–18 (MHHLRALVGVGLAGLAAG), serve as a signal peptide directing secretion. One can recognise a GH18 domain in the interval 35–343 (AQNVVYWGQN…QQAKSILVNG (309 aa)). Asn-153 is a glycosylation site (N-linked (GlcNAc...) asparagine). Glu-173 acts as the Proton donor in catalysis. Residues Asn-237 and Asn-256 are each glycosylated (N-linked (GlcNAc...) asparagine). The tract at residues 343–390 (GAPCPSSGPPSSTPATAPAPTATTMPSSTSVSSPTASPTGGTVPQWGQ) is disordered. A compositionally biased stretch (low complexity) spans 355-384 (TPATAPAPTATTMPSSTSVSSPTASPTGGT). Residues 383 to 419 (GTVPQWGQCGGEGYSGPTQCVPPYQCVKQGDWWSSCR) enclose the CBM1 domain.

Belongs to the glycosyl hydrolase 18 family. Chitinase class III subfamily.

Its subcellular location is the secreted. It carries out the reaction Random endo-hydrolysis of N-acetyl-beta-D-glucosaminide (1-&gt;4)-beta-linkages in chitin and chitodextrins.. Functionally, secreted chitinase involved in the degradation of chitin, a component of the cell walls of fungi and exoskeletal elements of some animals (including worms and arthropods). Participates in the infection process and directly acts in the penetration process of the host cuticle. In Metarhizium anisopliae (Entomophthora anisopliae), this protein is Endochitinase 2 (chi2).